A 65-amino-acid polypeptide reads, in one-letter code: Large ribosomal subunit protein bL35 (65 aa).

This sequence belongs to the bacterial ribosomal protein bL35 family.

The protein is Large ribosomal subunit protein bL35 of Prochlorococcus marinus (strain MIT 9313).